The following is a 346-amino-acid chain: Tetraacyldisaccharide 4'-kinase (346 aa).

ATP is bound at residue 54–61 (TVGGAGKT).

The protein belongs to the LpxK family.

It catalyses the reaction a lipid A disaccharide + ATP = a lipid IVA + ADP + H(+). It functions in the pathway glycolipid biosynthesis; lipid IV(A) biosynthesis; lipid IV(A) from (3R)-3-hydroxytetradecanoyl-[acyl-carrier-protein] and UDP-N-acetyl-alpha-D-glucosamine: step 6/6. In terms of biological role, transfers the gamma-phosphate of ATP to the 4'-position of a tetraacyldisaccharide 1-phosphate intermediate (termed DS-1-P) to form tetraacyldisaccharide 1,4'-bis-phosphate (lipid IVA). This is Tetraacyldisaccharide 4'-kinase from Sinorhizobium medicae (strain WSM419) (Ensifer medicae).